Here is a 316-residue protein sequence, read N- to C-terminus: Ribosomal RNA small subunit methyltransferase H (316 aa).

Residues 35–37, Asp55, Phe80, Asp102, and Gln109 contribute to the S-adenosyl-L-methionine site; that span reads GGH.

Belongs to the methyltransferase superfamily. RsmH family.

It localises to the cytoplasm. The catalysed reaction is cytidine(1402) in 16S rRNA + S-adenosyl-L-methionine = N(4)-methylcytidine(1402) in 16S rRNA + S-adenosyl-L-homocysteine + H(+). In terms of biological role, specifically methylates the N4 position of cytidine in position 1402 (C1402) of 16S rRNA. The polypeptide is Ribosomal RNA small subunit methyltransferase H (Colwellia psychrerythraea (strain 34H / ATCC BAA-681) (Vibrio psychroerythus)).